The primary structure comprises 374 residues: Putative zinc finger MYND domain-containing protein R331 (374 aa).

8 residues coordinate Zn(2+): cysteine 328, cysteine 331, cysteine 341, cysteine 344, cysteine 350, cysteine 354, histidine 362, and cysteine 366. An MYND-type zinc finger spans residues cysteine 328–cysteine 366.

This chain is Putative zinc finger MYND domain-containing protein R331, found in Acanthamoeba polyphaga (Amoeba).